The following is a 324-amino-acid chain: Beta-ketoacyl-[acyl-carrier-protein] synthase III (324 aa).

Active-site residues include Cys112 and His249. The interval 250–254 (QANRR) is ACP-binding. Residue Asn279 is part of the active site.

It belongs to the thiolase-like superfamily. FabH family. Homodimer.

Its subcellular location is the cytoplasm. The enzyme catalyses malonyl-[ACP] + acetyl-CoA + H(+) = 3-oxobutanoyl-[ACP] + CO2 + CoA. Its pathway is lipid metabolism; fatty acid biosynthesis. In terms of biological role, catalyzes the condensation reaction of fatty acid synthesis by the addition to an acyl acceptor of two carbons from malonyl-ACP. Catalyzes the first condensation reaction which initiates fatty acid synthesis and may therefore play a role in governing the total rate of fatty acid production. Possesses both acetoacetyl-ACP synthase and acetyl transacylase activities. Its substrate specificity determines the biosynthesis of branched-chain and/or straight-chain of fatty acids. This Streptococcus pyogenes serotype M6 (strain ATCC BAA-946 / MGAS10394) protein is Beta-ketoacyl-[acyl-carrier-protein] synthase III.